The sequence spans 1122 residues: Protein CAF130 (1122 aa).

The interval 1 to 24 is disordered; it reads MTKKKAATNYAERQNLASEDSSGD. The span at 11-24 shows a compositional bias: polar residues; it reads AERQNLASEDSSGD. Ser-1042 carries the post-translational modification Phosphoserine.

Subunit of the 1.0 MDa CCR4-NOT core complex that contains CCR4, CAF1, NOT1, NOT2, NOT3, NOT4, NOT5, CAF40 and CAF130. In the complex interacts with NOT1. The core complex probably is part of a less characterized 1.9 MDa CCR4-NOT complex.

Its subcellular location is the cytoplasm. The protein resides in the nucleus. Acts as a component of the CCR4-NOT core complex, which in the nucleus seems to be a general transcription factor, and in the cytoplasm the major mRNA deadenylase involved in mRNA turnover. This is Protein CAF130 (CAF130) from Saccharomyces cerevisiae (strain ATCC 204508 / S288c) (Baker's yeast).